The following is a 305-amino-acid chain: Dihydroorotate dehydrogenase B (NAD(+)), catalytic subunit (305 aa).

Residues Ser-20 and 44–45 (KG) contribute to the FMN site. Substrate-binding positions include Lys-44 and 68–72 (NAIGI). FMN-binding residues include Asn-98 and Asn-126. Asn-126 serves as a coordination point for substrate. Residue Cys-129 is the Nucleophile of the active site. FMN is bound by residues Lys-165 and Ile-191. Residue 192–193 (NT) coordinates substrate. FMN is bound by residues Gly-217, 243-244 (GG), and 265-266 (GT).

It belongs to the dihydroorotate dehydrogenase family. Type 1 subfamily. As to quaternary structure, heterotetramer of 2 PyrK and 2 PyrD type B subunits. The cofactor is FMN.

The protein localises to the cytoplasm. The catalysed reaction is (S)-dihydroorotate + NAD(+) = orotate + NADH + H(+). The protein operates within pyrimidine metabolism; UMP biosynthesis via de novo pathway; orotate from (S)-dihydroorotate (NAD(+) route): step 1/1. Catalyzes the conversion of dihydroorotate to orotate with NAD(+) as electron acceptor. This Maridesulfovibrio salexigens (strain ATCC 14822 / DSM 2638 / NCIMB 8403 / VKM B-1763) (Desulfovibrio salexigens) protein is Dihydroorotate dehydrogenase B (NAD(+)), catalytic subunit (pyrD).